The following is a 419-amino-acid chain: AT-rich binding protein (419 aa).

The segment at 29-52 adopts a C2H2-type 1 zinc-finger fold; that stretch reads IVCHTCQEELQTQDAFWKHIQDEH. Positions 121–179 are disordered; the sequence is LHEAQHQQQQQQQQHQQQQQQQQHQQQQQHQHHQHQQQQQHLHQQQQQQQQQQRDAAKE. 2 stretches are compositionally biased toward low complexity: residues 126 to 149 and 156 to 173; these read HQQQ…QQQQ and QQQQ…QQQQ. 2 consecutive C2H2-type zinc fingers follow at residues 352–376 and 382–405; these read YVCD…RVVH and FNCD…KKKH.

The protein localises to the nucleus. May be a transcription factor for genes having (A+T) stretches in their promoter and/or enhancer regions. Binds to AT rich DNA. This Drosophila grimshawi (Hawaiian fruit fly) protein is AT-rich binding protein.